The primary structure comprises 424 residues: Light-independent protochlorophyllide reductase subunit N (424 aa).

Cys27, Cys52, and Cys113 together coordinate [4Fe-4S] cluster.

Belongs to the BchN/ChlN family. In terms of assembly, protochlorophyllide reductase is composed of three subunits; BchL, BchN and BchB. Forms a heterotetramer of two BchB and two BchN subunits. [4Fe-4S] cluster serves as cofactor.

The catalysed reaction is chlorophyllide a + oxidized 2[4Fe-4S]-[ferredoxin] + 2 ADP + 2 phosphate = protochlorophyllide a + reduced 2[4Fe-4S]-[ferredoxin] + 2 ATP + 2 H2O. It functions in the pathway porphyrin-containing compound metabolism; bacteriochlorophyll biosynthesis (light-independent). Its function is as follows. Component of the dark-operative protochlorophyllide reductase (DPOR) that uses Mg-ATP and reduced ferredoxin to reduce ring D of protochlorophyllide (Pchlide) to form chlorophyllide a (Chlide). This reaction is light-independent. The NB-protein (BchN-BchB) is the catalytic component of the complex. This Halorhodospira halophila (strain DSM 244 / SL1) (Ectothiorhodospira halophila (strain DSM 244 / SL1)) protein is Light-independent protochlorophyllide reductase subunit N.